The chain runs to 221 residues: GFP-like non-fluorescent chromoprotein (221 aa).

Residues 62–64 (QYG) constitute a cross-link (2-iminomethyl-5-imidazolinone (Gln-Gly)). (E)-2,3-didehydrotyrosine is present on Tyr63.

The protein belongs to the GFP family. In terms of assembly, homotetramer. Post-translationally, contains a chromophore consisting of modified amino acid residues. The chromophore is formed by autocatalytic backbone condensation between Xaa-N and Gly-(N+2), oxidation of Tyr-(N+1) to didehydrotyrosine, and formation of a double bond to the alpha-amino nitrogen of residue Xaa-N. Maturation of the chromophore requires nothing other than molecular oxygen.

Functionally, thought to play a role in photoprotection of the coral's resident symbiont microalgae's photosystems from photoinhibition caused by high light levels found near the surface of coral reefs. This Montipora efflorescens (Pore coral) protein is GFP-like non-fluorescent chromoprotein.